Here is a 127-residue protein sequence, read N- to C-terminus: Major sperm protein 10/36/56/76 (127 aa).

Ala-2 bears the N-acetylalanine mark. Residues 9-126 enclose the MSP domain; the sequence is DIQTQPNAKI…RRKNLPIEYN (118 aa).

Sperm.

The protein localises to the cell projection. It is found in the pseudopodium. It localises to the cytoplasm. Its subcellular location is the cytoskeleton. Central component in molecular interactions underlying sperm crawling. Forms an extensive filament system that extends from sperm villipoda, along the leading edge of the pseudopod. The polypeptide is Major sperm protein 10/36/56/76 (msp-10) (Caenorhabditis elegans).